Reading from the N-terminus, the 1132-residue chain is Tyrosine-protein kinase JAK2 (1132 aa).

The tract at residues 1–239 (MGMACLTMTE…RYRFRRFIQQ (239 aa)) is interaction with cytokine/interferon/growth hormone receptors. One can recognise an FERM domain in the interval 37 to 380 (PVLQVYLYHS…GYYRLTADAH (344 aa)). The residue at position 119 (Y119) is a Phosphotyrosine; by autocatalysis. Y372 and Y373 each carry phosphotyrosine. The SH2; atypical domain maps to 401–482 (HGPISMDFAI…SLKDLLNCYQ (82 aa)). A Phosphoserine modification is found at S523. The Protein kinase 1 domain maps to 545–809 (LIFNESLGQG…AVIRDLNSLF (265 aa)). Y570 and Y813 each carry phosphotyrosine. The Protein kinase 2 domain occupies 849–1126 (LKFLQQLGKG…RDLSLRVDQI (278 aa)). Residue 855–863 (LGKGNFGSV) coordinates ATP. Position 868 is a phosphotyrosine; by autocatalysis (Y868). K882 provides a ligand contact to ATP. Phosphotyrosine; by autocatalysis is present on residues Y966 and Y972. The active-site Proton acceptor is the D976. A phosphotyrosine; by autocatalysis mark is found at Y1007 and Y1008.

The protein belongs to the protein kinase superfamily. Tyr protein kinase family. JAK subfamily. As to quaternary structure, interacts with IL23R, SKB1 and STAM2. Interacts with EPOR. Interacts with LYN. Interacts with SIRPA. Interacts with SH2B1. Interacts with TEC. Interacts with IFNGR2 (via intracellular domain). Interacts with LEPR (Isoform B). Interacts with HSP90AB1; promotes functional activation in a heat shock-dependent manner. Interacts with STRA6. Interacts with ASB2; the interaction targets JAK2 for Notch-induced proteasomal degradation. Mg(2+) serves as cofactor. Post-translationally, autophosphorylated, leading to regulate its activity. Leptin promotes phosphorylation on tyrosine residues, including phosphorylation on Tyr-813. Autophosphorylation on Tyr-119 in response to EPO down-regulates its kinase activity. Autophosphorylation on Tyr-868, Tyr-966 and Tyr-972 in response to growth hormone (GH) are required for maximal kinase activity. Also phosphorylated by TEC. Phosphorylated on tyrosine residues in response to interferon gamma signaling. Phosphorylated on tyrosine residues in response to a signaling cascade that is activated by increased cellular retinol. In terms of processing, undergoes Notch-induced ubiquitination and subsequent proteasomal degradation which is mediated by ASB1 or ASB2, the substrate-recognition components of probable ECS E3 ubiquitin-protein ligase complexes. Ubiquitously expressed throughout most tissues.

It localises to the endomembrane system. The protein localises to the cytoplasm. Its subcellular location is the nucleus. It catalyses the reaction L-tyrosyl-[protein] + ATP = O-phospho-L-tyrosyl-[protein] + ADP + H(+). Regulated by autophosphorylation, can both activate or decrease activity. Heme regulates its activity by enhancing the phosphorylation on Tyr-1007 and Tyr-1008. Non-receptor tyrosine kinase involved in various processes such as cell growth, development, differentiation or histone modifications. Mediates essential signaling events in both innate and adaptive immunity. In the cytoplasm, plays a pivotal role in signal transduction via its association with type I receptors such as growth hormone (GHR), prolactin (PRLR), leptin (LEPR), erythropoietin (EPOR), thrombopoietin (THPO); or type II receptors including IFN-alpha, IFN-beta, IFN-gamma and multiple interleukins. Following ligand-binding to cell surface receptors, phosphorylates specific tyrosine residues on the cytoplasmic tails of the receptor, creating docking sites for STATs proteins. Subsequently, phosphorylates the STATs proteins once they are recruited to the receptor. Phosphorylated STATs then form homodimer or heterodimers and translocate to the nucleus to activate gene transcription. For example, cell stimulation with erythropoietin (EPO) during erythropoiesis leads to JAK2 autophosphorylation, activation, and its association with erythropoietin receptor (EPOR) that becomes phosphorylated in its cytoplasmic domain. Then, STAT5 (STAT5A or STAT5B) is recruited, phosphorylated and activated by JAK2. Once activated, dimerized STAT5 translocates into the nucleus and promotes the transcription of several essential genes involved in the modulation of erythropoiesis. Part of a signaling cascade that is activated by increased cellular retinol and that leads to the activation of STAT5 (STAT5A or STAT5B). In addition, JAK2 mediates angiotensin-2-induced ARHGEF1 phosphorylation. Plays a role in cell cycle by phosphorylating CDKN1B. Cooperates with TEC through reciprocal phosphorylation to mediate cytokine-driven activation of FOS transcription. In the nucleus, plays a key role in chromatin by specifically mediating phosphorylation of 'Tyr-41' of histone H3 (H3Y41ph), a specific tag that promotes exclusion of CBX5 (HP1 alpha) from chromatin. Up-regulates the potassium voltage-gated channel activity of KCNA3. This is Tyrosine-protein kinase JAK2 from Rattus norvegicus (Rat).